The following is a 430-amino-acid chain: MSEEVVQDAPLENNELNAEIDLQKTIQEEYKLWKQNVPFLYDLVITHALEWPSLTIQWLPDKKTIPGTDYSIQRLILGTHTSGNDQNYLQIASVQLPNFDEDTTEFTPSTIRRAQATGSYTIEISQKIPHDGDVNRARYMPQKPEIIATMGEGGNAYIFDTTCHDALTTGEALPQAVLKGHTAEGFGLCWNPNLPGNLATGAEDQVICLWDVQTQSFTSSETKVISPIAKYHRHTDIVNDVQFHPQHEALLASVSDDCTLQIHDTRLNPEEEAPKVIQAHSKAINAVAINPFNDYLLATASADKTVALWDLRNPYQRLHTLEGHEDEVYGLEWSPHDEPILASSSTDRRVCIWDLEKIGEEQTPEDAEDGSPELLFMHGGHTNRISEFSWCPNERWVVGSLADDNILQIWSPSRVIWGRDHVQVSPRDLE.

WD repeat units follow at residues 129–169 (PHDG…ALTT), 180–220 (GHTA…FTSS), 233–273 (RHTD…EEEA), 279–319 (AHSK…QRLH), and 323–363 (GHED…EEQT). The interaction with the histone H4 N-terminus stretch occupies residues 365–369 (EDAED). The WD 6 repeat unit spans residues 380–420 (GHTNRISEFSWCPNERWVVGSLADDNILQIWSPSRVIWGRD). Position 425 is a phosphoserine (Ser-425).

It belongs to the WD repeat RBAP46/RBAP48/MSI1 family. As to quaternary structure, component of the HAT-B complex composed of at least hat1 and hat2. The HAT-B complex binds to histone H4 tail. Component of the CENP-A recruiting complex composed of at least mis16, mis19, mis19 and mis20.

It localises to the cytoplasm. The protein localises to the nucleus. Its subcellular location is the chromosome. It is found in the centromere. The protein resides in the kinetochore. Functionally, regulatory subunit of the histone acetylase B (HAT-B) complex. The complex acetylates 'Lys-12' of histone H4 which is required for telomeric silencing. Component of the CENP-A recruiting complex that ensures the integrity of mitotic spindles through maintenance of kinetochore factors mis6/CENP-I and cnp1/CENP-A. Maintains the deacetylated state of histones specifically in the central core of the centromeres. This Schizosaccharomyces pombe (strain 972 / ATCC 24843) (Fission yeast) protein is Histone acetyltransferase type B subunit 2 (mis16).